A 129-amino-acid chain; its full sequence is Large ribosomal subunit protein bL19 (129 aa).

Belongs to the bacterial ribosomal protein bL19 family.

In terms of biological role, this protein is located at the 30S-50S ribosomal subunit interface and may play a role in the structure and function of the aminoacyl-tRNA binding site. The protein is Large ribosomal subunit protein bL19 of Granulibacter bethesdensis (strain ATCC BAA-1260 / CGDNIH1).